A 71-amino-acid chain; its full sequence is General transcription factor IIH subunit 5 (71 aa).

Thr-69 carries the phosphothreonine modification.

The protein belongs to the TFB5 family. In terms of assembly, component of the 7-subunit TFIIH core complex composed of XPB/ERCC3, XPD/ERCC2, GTF2H1, GTF2H2, GTF2H3, GTF2H4 and GTF2H5, which is active in NER. The core complex associates with the 3-subunit CDK-activating kinase (CAK) module composed of CCNH/cyclin H, CDK7 and MNAT1 to form the 10-subunit holoenzyme (holo-TFIIH) active in transcription. Part of TBP-based Pol II pre-initiation complex (PIC), in which Pol II core assembles with general transcription factors and other specific initiation factors including GTF2E1, GTF2E2, GTF2F1, GTF2F2, TCEA1, ERCC2, ERCC3, GTF2H2, GTF2H3, GTF2H4, GTF2H5, GTF2A1, GTF2A2, GTF2B and TBP; this large multi-subunit PIC complex mediates DNA unwinding and targets Pol II core to the transcription start site where the first phosphodiester bond forms.

The protein localises to the nucleus. It localises to the cytoplasm. In terms of biological role, component of the general transcription and DNA repair factor IIH (TFIIH) core complex, which is involved in general and transcription-coupled nucleotide excision repair (NER) of damaged DNA and, when complexed to CAK, in RNA transcription by RNA polymerase II. In NER, TFIIH acts by opening DNA around the lesion to allow the excision of the damaged oligonucleotide and its replacement by a new DNA fragment. In transcription, TFIIH has an essential role in transcription initiation. When the pre-initiation complex (PIC) has been established, TFIIH is required for promoter opening and promoter escape. Phosphorylation of the C-terminal tail (CTD) of the largest subunit of RNA polymerase II by the kinase module CAK controls the initiation of transcription. Necessary for the stability of the TFIIH complex and for the presence of normal levels of TFIIH in the cell. This is General transcription factor IIH subunit 5 from Mus musculus (Mouse).